The following is a 321-amino-acid chain: Lambda-crystallin homolog (321 aa).

The residue at position 6 (serine 6) is a Phosphoserine. NAD(+) is bound by residues 19-20, aspartate 39, glutamate 100, and lysine 105; that span reads LI.

The protein belongs to the 3-hydroxyacyl-CoA dehydrogenase family. In terms of assembly, homodimer.

Its subcellular location is the cytoplasm. The catalysed reaction is L-gulonate + NAD(+) = 3-dehydro-L-gulonate + NADH + H(+). Its activity is regulated as follows. Inhibited by malonate. Functionally, has high L-gulonate 3-dehydrogenase activity. It also exhibits low dehydrogenase activity toward L-3-hydroxybutyrate (HBA) and L-threonate. This chain is Lambda-crystallin homolog (CRYL1), found in Bos taurus (Bovine).